Reading from the N-terminus, the 363-residue chain is Teichoic acids export ATP-binding protein TagH (363 aa).

An ABC transporter domain is found at Lys27–Ala246. Gly60 to Ser67 contributes to the ATP binding site. The segment at Gln247–Lys363 is unknown.

Belongs to the ABC transporter superfamily. Teichoic acids exporter (TC 3.A.1.104.1) family. In terms of assembly, the complex is composed of two ATP-binding proteins (TagH) and two transmembrane proteins (TagG).

It localises to the cell membrane. It carries out the reaction ATP + H2O + teichoic acidSide 1 = ADP + phosphate + teichoic acidSide 2.. Functionally, part of the ABC transporter complex TagGH involved in teichoic acids export. Responsible for energy coupling to the transport system. This Lactiplantibacillus plantarum (strain ATCC BAA-793 / NCIMB 8826 / WCFS1) (Lactobacillus plantarum) protein is Teichoic acids export ATP-binding protein TagH.